A 226-amino-acid chain; its full sequence is UPF0177 protein YbdJ (226 aa).

5 helical membrane passes run L16 to F36, F43 to A63, L81 to L101, F169 to V189, and L206 to F226.

It belongs to the UPF0177 family.

The protein resides in the cell membrane. This is UPF0177 protein YbdJ (ybdJ) from Lactococcus lactis subsp. lactis (strain IL1403) (Streptococcus lactis).